The primary structure comprises 419 residues: Adenylosuccinate synthetase (419 aa).

GTP is bound by residues 11–17 (GDEGKGK) and 39–41 (GHT). The active-site Proton acceptor is the Asp-12. Mg(2+) is bound by residues Asp-12 and Gly-39. IMP is bound by residues 12-15 (DEGK), 37-40 (NAGH), Thr-129, Arg-143, Asn-218, Thr-233, and Arg-297. His-40 acts as the Proton donor in catalysis. A substrate-binding site is contributed by 293 to 299 (VTTGRKR). GTP-binding positions include Arg-299, 325 to 327 (KLD), and 407 to 409 (GTG).

This sequence belongs to the adenylosuccinate synthetase family. Homodimer. Requires Mg(2+) as cofactor.

It localises to the cytoplasm. The enzyme catalyses IMP + L-aspartate + GTP = N(6)-(1,2-dicarboxyethyl)-AMP + GDP + phosphate + 2 H(+). Its pathway is purine metabolism; AMP biosynthesis via de novo pathway; AMP from IMP: step 1/2. Plays an important role in the de novo pathway and in the salvage pathway of purine nucleotide biosynthesis. Catalyzes the first committed step in the biosynthesis of AMP from IMP. The sequence is that of Adenylosuccinate synthetase from Coccidioides posadasii (strain C735) (Valley fever fungus).